Consider the following 443-residue polypeptide: Phosphoglucosamine mutase (443 aa).

S101 (phosphoserine intermediate) is an active-site residue. The Mg(2+) site is built by S101, D239, D241, and D243. S101 is modified (phosphoserine).

This sequence belongs to the phosphohexose mutase family. The cofactor is Mg(2+). In terms of processing, activated by phosphorylation.

It carries out the reaction alpha-D-glucosamine 1-phosphate = D-glucosamine 6-phosphate. Functionally, catalyzes the conversion of glucosamine-6-phosphate to glucosamine-1-phosphate. This Francisella tularensis subsp. tularensis (strain FSC 198) protein is Phosphoglucosamine mutase.